We begin with the raw amino-acid sequence, 571 residues long: Wee1-like protein kinase 1-A (571 aa).

The disordered stretch occupies residues 1 to 101 (MSLQPVPHRL…PDCPGTPPHK (101 aa)). Over residues 81–98 (PASPPGPAASPPDCPGTP) the composition is skewed to pro residues. A Protein kinase domain is found at 224–494 (FHELEKIGSG…SMALVKHSVL (271 aa)). Residues 230–238 (IGSGEFGSV) and K253 each bind ATP. Catalysis depends on D351, which acts as the Proton acceptor. Mg(2+) is bound by residues N356 and D388. A coiled-coil region spans residues 500 to 539 (KNAEQLRIELNAEKFKNALLQKELKKAQIAKAAAEERALF).

It belongs to the protein kinase superfamily. Ser/Thr protein kinase family. WEE1 subfamily. Zygotically expressed. Expressed in regions of the embryo that are devoid of mitotic cells, such as the involuting mesoderm.

Its subcellular location is the nucleus. It carries out the reaction L-tyrosyl-[protein] + ATP = O-phospho-L-tyrosyl-[protein] + ADP + H(+). Its function is as follows. Acts as a zygotic negative regulator of entry into mitosis (G2 to M transition) by protecting the nucleus from cytoplasmically activated cyclin B1-complexed cdk1 before the onset of mitosis by mediating phosphorylation of cdk1 on 'Tyr-15'. Specifically phosphorylates and inactivates cyclin B1-complexed cdk1 reaching a maximum during G2 phase and a minimum as cells enter M phase. Phosphorylation of cyclin B1-cdk1 occurs exclusively on 'Tyr-15' and phosphorylation of monomeric cdk1 does not occur. Involved in convergent extension of the paraxial mesoderm during neurulation by inhibiting the cell cycle. This is Wee1-like protein kinase 1-A (wee1-a) from Xenopus laevis (African clawed frog).